The chain runs to 533 residues: MSSLVSEIARRRTFAIISHPDAGKTTLTEKLLWFGGAIQVAGEVRARKADRHATSDWMELEKQRGISVTSSVMQFPYRRETADGKAQENIVNLLDTPGHEDFSEDTYRTLTAVDSAVMVIDSVNGVEAQTIKLLNVCRLRDTPILTFINKLDREGRSPIELLDEIEEVLQIQCAPMTWPIGMGKAFRGVYHLINDKVQLFDPHGEKGTAAILDGLDNPELDRILGSQAEELRIEIELVRGASHTFDKDAFLNGKQTPVYFGSAINNFGVQSLLDALCELSPPPLARNTDSRVVEPQEPKFTGFVFKIQANMDPRHRDRIAFVRVCSGRFERGMKLLHVSAGKTVAINNAITFMAQDRNTTEEAYAGDIIGVPNHGTIRLGDVFTEGEPLKFTGIPSFAPEFFRRARLNNPLKVKQLQKGLQQLAEEGATQMFRPLASNDLVLGAVGILQFDVVAHRLEHEYGVDAIFESHECATARWLKGTPAEIEKLIAKAGHNVALDGAGDHVYLAPSMVNLRLTQERFPELQFMETREIV.

One can recognise a tr-type G domain in the interval 9-284 (ARRRTFAIIS…ALCELSPPPL (276 aa)). Residues 18-25 (SHPDAGKT), 95-99 (DTPGH), and 149-152 (NKLD) contribute to the GTP site.

The protein belongs to the TRAFAC class translation factor GTPase superfamily. Classic translation factor GTPase family. PrfC subfamily.

It localises to the cytoplasm. In terms of biological role, increases the formation of ribosomal termination complexes and stimulates activities of RF-1 and RF-2. It binds guanine nucleotides and has strong preference for UGA stop codons. It may interact directly with the ribosome. The stimulation of RF-1 and RF-2 is significantly reduced by GTP and GDP, but not by GMP. This is Peptide chain release factor 3 from Cupriavidus necator (strain ATCC 17699 / DSM 428 / KCTC 22496 / NCIMB 10442 / H16 / Stanier 337) (Ralstonia eutropha).